We begin with the raw amino-acid sequence, 335 residues long: Beta-ketoacyl-[acyl-carrier-protein] synthase III (335 aa).

Active-site residues include C116 and H256. The interval 257–261 (QANLR) is ACP-binding. N286 is an active-site residue.

The protein belongs to the thiolase-like superfamily. FabH family. Homodimer.

The protein localises to the cytoplasm. The catalysed reaction is malonyl-[ACP] + acetyl-CoA + H(+) = 3-oxobutanoyl-[ACP] + CO2 + CoA. The protein operates within lipid metabolism; fatty acid biosynthesis. In terms of biological role, catalyzes the condensation reaction of fatty acid synthesis by the addition to an acyl acceptor of two carbons from malonyl-ACP. Catalyzes the first condensation reaction which initiates fatty acid synthesis and may therefore play a role in governing the total rate of fatty acid production. Possesses both acetoacetyl-ACP synthase and acetyl transacylase activities. Its substrate specificity determines the biosynthesis of branched-chain and/or straight-chain of fatty acids. This chain is Beta-ketoacyl-[acyl-carrier-protein] synthase III, found in Porphyromonas gingivalis (strain ATCC BAA-308 / W83).